A 208-amino-acid chain; its full sequence is Small ribosomal subunit protein uS4 (208 aa).

The S4 RNA-binding domain maps to 98-160 (RRLDNVVYRL…SKSKTRFVEI (63 aa)).

This sequence belongs to the universal ribosomal protein uS4 family. In terms of assembly, part of the 30S ribosomal subunit. Contacts protein S5. The interaction surface between S4 and S5 is involved in control of translational fidelity.

In terms of biological role, one of the primary rRNA binding proteins, it binds directly to 16S rRNA where it nucleates assembly of the body of the 30S subunit. Functionally, with S5 and S12 plays an important role in translational accuracy. The chain is Small ribosomal subunit protein uS4 from Caldicellulosiruptor bescii (strain ATCC BAA-1888 / DSM 6725 / KCTC 15123 / Z-1320) (Anaerocellum thermophilum).